Here is a 132-residue protein sequence, read N- to C-terminus: MSDPSEGSLTPGELLVDDAPVELNAGRETATVTVENTGDRPVQVGSHYHFFETNPALAFDRETAYGMRLNIPAGTAVRFEPGAERDVELVAIGGDRIVHGMDGLVNGDLDDEATRERAMDRAAAAGYRGVER.

The protein belongs to the urease beta subunit family. As to quaternary structure, heterotrimer of UreA (gamma), UreB (beta) and UreC (alpha) subunits. Three heterotrimers associate to form the active enzyme.

Its subcellular location is the cytoplasm. The enzyme catalyses urea + 2 H2O + H(+) = hydrogencarbonate + 2 NH4(+). Its pathway is nitrogen metabolism; urea degradation; CO(2) and NH(3) from urea (urease route): step 1/1. This Natronomonas pharaonis (strain ATCC 35678 / DSM 2160 / CIP 103997 / JCM 8858 / NBRC 14720 / NCIMB 2260 / Gabara) (Halobacterium pharaonis) protein is Urease subunit beta.